Consider the following 308-residue polypeptide: Very-long-chain enoyl-CoA reductase (308 aa).

The Cytoplasmic portion of the chain corresponds to 1-86 (MKHYEVEIRD…YFRDLGAQIS (86 aa)). Lys-22 carries the post-translational modification N6-acetyllysine. Ser-58 carries the phosphoserine modification. N6-acetyllysine is present on Lys-60. The helical transmembrane segment at 87–106 (WVTVFLTEYAGPLFIYLLFY) threads the bilayer. Over 107-124 (FRVPFIYGRKYDFTSSRH) the chain is Lumenal. A helical transmembrane segment spans residues 125 to 147 (TVVHLACMCHSFHYIKRLLETLF). Residues 148 to 158 (VHRFSHGTMPL) are Cytoplasmic-facing. Residues 159 to 180 (RNIFKNCTYYWGFAAWMAYYIN) traverse the membrane as a helical segment. Residues 181 to 189 (HPLYTPPTY) lie on the Lumenal side of the membrane. The chain crosses the membrane as a helical span at residues 190 to 216 (GVQQVKLALAVFVICQLGNFSIHMALR). The Cytoplasmic segment spans residues 217 to 245 (DLRPAGSKTRKIPYPTKNPFTWLFLLVSC). A helical membrane pass occupies residues 246-262 (PNYTYEVGSWIGFAILT). The Lumenal portion of the chain corresponds to 263–264 (QC). Residues 265–292 (VPVALFSLVGFTQMTIWAKGKHRSYLKE) traverse the membrane as a helical segment. Over 293–308 (FRDYPPLRMPIIPFLL) the chain is Cytoplasmic.

The protein belongs to the steroid 5-alpha reductase family. In terms of assembly, interacts with ELOVL1 and LASS2. In terms of processing, glycosylated.

It is found in the endoplasmic reticulum membrane. The enzyme catalyses a very-long-chain 2,3-saturated fatty acyl-CoA + NADP(+) = a very-long-chain (2E)-enoyl-CoA + NADPH + H(+). The catalysed reaction is octadecanoyl-CoA + NADP(+) = (2E)-octadecenoyl-CoA + NADPH + H(+). It carries out the reaction (2E,7Z,10Z,13Z,16Z)-docosapentaenoyl-CoA + NADPH + H(+) = (7Z,10Z,13Z,16Z)-docosatetraenoyl-CoA + NADP(+). It catalyses the reaction (2E,7Z,10Z,13Z,16Z,19Z)-docosahexaenoyl-CoA + NADPH + H(+) = (7Z,10Z,13Z,16Z,19Z)-docosapentaenoyl-CoA + NADP(+). The enzyme catalyses (2E,8Z,11Z,14Z)-eicosatetraenoyl-CoA + NADPH + H(+) = (8Z,11Z,14Z)-eicosatrienoyl-CoA + NADP(+). The catalysed reaction is (2E)-hexadecenoyl-CoA + NADPH + H(+) = hexadecanoyl-CoA + NADP(+). The protein operates within lipid metabolism; fatty acid biosynthesis. It participates in lipid metabolism; sphingolipid metabolism. Involved in both the production of very long-chain fatty acids for sphingolipid synthesis and the degradation of the sphingosine moiety in sphingolipids through the sphingosine 1-phosphate metabolic pathway. Catalyzes the last of the four reactions of the long-chain fatty acids elongation cycle. This endoplasmic reticulum-bound enzymatic process, allows the addition of 2 carbons to the chain of long- and very long-chain fatty acids/VLCFAs per cycle. This enzyme reduces the trans-2,3-enoyl-CoA fatty acid intermediate to an acyl-CoA that can be further elongated by entering a new cycle of elongation. Thereby, it participates in the production of VLCFAs of different chain lengths that are involved in multiple biological processes as precursors of membrane lipids and lipid mediators. Catalyzes the saturation step of the sphingosine 1-phosphate metabolic pathway, the conversion of trans-2-hexadecenoyl-CoA to palmitoyl-CoA. This Mus musculus (Mouse) protein is Very-long-chain enoyl-CoA reductase (Tecr).